We begin with the raw amino-acid sequence, 451 residues long: Mannan endo-1,6-alpha-mannosidase DFG5 (451 aa).

The signal sequence occupies residues 1 to 21 (MVSLQQLTISILLLFTASVQS). N-linked (GlcNAc...) asparagine glycans are attached at residues N86, N111, N135, N203, N243, N268, and N402. A429 is lipidated: GPI-anchor amidated alanine. Positions 430–451 (GAGVLTAIVLAVILGGAIWMIF) are cleaved as a propeptide — removed in mature form.

The protein belongs to the glycosyl hydrolase 76 family. In terms of processing, the GPI-anchor is attached to the protein in the endoplasmic reticulum and serves to target the protein to the cell surface. There, the glucosamine-inositol phospholipid moiety is cleaved off and the GPI-modified mannoprotein is covalently attached via its lipidless GPI glycan remnant to the 1,6-beta-glucan of the outer cell wall layer. Post-translationally, N-mannosylated.

It localises to the secreted. Its subcellular location is the cell wall. The protein localises to the cell membrane. It catalyses the reaction Random hydrolysis of (1-&gt;6)-alpha-D-mannosidic linkages in unbranched (1-&gt;6)-mannans.. In terms of biological role, required for normal synthesis of the cell wall and alkaline pH-induced hypha formation. This Candida albicans (strain SC5314 / ATCC MYA-2876) (Yeast) protein is Mannan endo-1,6-alpha-mannosidase DFG5 (DFG5).